Here is a 152-residue protein sequence, read N- to C-terminus: Protein-export protein SecB (152 aa).

Belongs to the SecB family. As to quaternary structure, homotetramer, a dimer of dimers. One homotetramer interacts with 1 SecA dimer.

It localises to the cytoplasm. In terms of biological role, one of the proteins required for the normal export of preproteins out of the cell cytoplasm. It is a molecular chaperone that binds to a subset of precursor proteins, maintaining them in a translocation-competent state. It also specifically binds to its receptor SecA. This Rickettsia akari (strain Hartford) protein is Protein-export protein SecB.